The chain runs to 241 residues: Carboxy-S-adenosyl-L-methionine synthase (241 aa).

Residues Y38, 63–65 (GCS), 88–89 (DN), 116–117 (DI), N131, and R198 contribute to the S-adenosyl-L-methionine site.

The protein belongs to the class I-like SAM-binding methyltransferase superfamily. Cx-SAM synthase family. Homodimer.

The enzyme catalyses prephenate + S-adenosyl-L-methionine = carboxy-S-adenosyl-L-methionine + 3-phenylpyruvate + H2O. In terms of biological role, catalyzes the conversion of S-adenosyl-L-methionine (SAM) to carboxy-S-adenosyl-L-methionine (Cx-SAM). The sequence is that of Carboxy-S-adenosyl-L-methionine synthase from Haemophilus influenzae (strain PittGG).